Reading from the N-terminus, the 321-residue chain is Olfactory receptor 51V1 (321 aa).

Topologically, residues 1–34 (MFLSSRMITSVSPSTSTNSSFLLTGFSGMEQQYP) are extracellular. A glycan (N-linked (GlcNAc...) asparagine) is linked at Asn18. The chain crosses the membrane as a helical span at residues 35–55 (WLSIPFSSIYAMVLLGNCMVL). Residues 56–63 (HVIWTEPS) lie on the Cytoplasmic side of the membrane. A helical transmembrane segment spans residues 64–84 (LHQPMFYFLSMLALTDLCMGL). The Extracellular segment spans residues 85-108 (STVYTVLGILWGIIREISLDSCIA). Cys106 and Cys188 form a disulfide bridge. Residues 109-129 (QSYFIHGLSFMESSVLLTMAF) form a helical membrane-spanning segment. Residues 130-148 (DRYIAICNPLRYSSILTNS) are Cytoplasmic-facing. Residues 149-169 (RIIKIGLTIIGRSFFFITPPI) traverse the membrane as a helical segment. Over 170–205 (ICLKFFNYCHFHILSHSFCLHQDLLRLACSDIRFNS) the chain is Extracellular. The helical transmembrane segment at 206 to 226 (YYALMLVICILLLDAILILFS) threads the bilayer. Topologically, residues 227–246 (YILILKSVLAVASQEERHKL) are cytoplasmic. Residues 247–267 (FQTCISHICAVLVFYIPIISL) traverse the membrane as a helical segment. The Extracellular portion of the chain corresponds to 268 to 282 (TMVHRFGKHLSPVAH). Residues 283 to 303 (VLIGNIYILFPPLMNPIIYSV) traverse the membrane as a helical segment. Residues 304 to 321 (KTQQIHTRMLRLFSLKRY) lie on the Cytoplasmic side of the membrane.

This sequence belongs to the G-protein coupled receptor 1 family.

The protein localises to the cell membrane. In terms of biological role, odorant receptor. The sequence is that of Olfactory receptor 51V1 (OR51V1) from Homo sapiens (Human).